We begin with the raw amino-acid sequence, 523 residues long: Cytoplasmic dynein 1 light intermediate chain 1 (523 aa).

The tract at residues 1 to 25 (MAAVGRVGSFGSSPPGLSSTYTGGP) is disordered. Residues 9–19 (SFGSSPPGLSS) show a composition bias toward low complexity. 74-81 (GEDGAGKT) is an ATP binding site. A Phosphoserine modification is found at S207. The residue at position 213 (T213) is a Phosphothreonine. 2 disordered regions span residues 387 to 434 (PPTA…DPNM) and 456 to 523 (TGSP…GEAS). A phosphoserine mark is found at S398 and S405. T408 is modified (phosphothreonine). A phosphoserine mark is found at S412, S419, S421, and S427. Residues 412–421 (SVSSNVASVS) are compositionally biased toward low complexity. Residues 458–478 (SPGGPGVSGGSPAGGAGGGSS) show a composition bias toward gly residues. Residue S487 is modified to Phosphoserine. Over residues 493–503 (LDVHAELDRIT) the composition is skewed to basic and acidic residues. Residues 506 to 523 (PVTVSPTTPTSPTEGEAS) are compositionally biased toward low complexity. Position 510 is a phosphoserine (S510). T512, T513, and T515 each carry phosphothreonine. S516 is modified (phosphoserine).

It belongs to the dynein light intermediate chain family. As to quaternary structure, homodimer. The cytoplasmic dynein 1 complex consists of two catalytic heavy chains (HCs) and a number of non-catalytic subunits presented by intermediate chains (ICs), light intermediate chains (LICs) and light chains (LCs); the composition seems to vary in respect to the IC, LIC and LC composition. The heavy chain homodimer serves as a scaffold for the probable homodimeric assembly of the respective non-catalytic subunits. The ICs and LICs bind directly to the HC dimer and the LCs assemble on the IC dimer. Self-associates. Interacts with DYNC1H1; DYNC1LI1 and DYNC1LI2 bind mutually exclusive to DYNC1H1. Interacts with PCNT. Forms a complex with RAB11FIP3 and RAB11A1; the interaction between DYNC1LI1 and RAB11FIP3 is direct and induces DYNC1LI1 localization onto endosomal membrane; the complex regulates endocytic trafficking. Interacts with RUFY3. In terms of assembly, (Microbial infection) Interacts with human adenovirus 5 hexon protein; this interaction probably allows virus intracellular transport. Phosphorylated during mitosis but not in interphase.

It is found in the cytoplasm. The protein resides in the chromosome. Its subcellular location is the centromere. It localises to the kinetochore. The protein localises to the cytoskeleton. It is found in the spindle pole. The protein resides in the recycling endosome membrane. Functionally, acts as one of several non-catalytic accessory components of the cytoplasmic dynein 1 complex that are thought to be involved in linking dynein to cargos and to adapter proteins that regulate dynein function. Cytoplasmic dynein 1 acts as a motor for the intracellular retrograde motility of vesicles and organelles along microtubules. May play a role in binding dynein to membranous organelles or chromosomes. Probably involved in the microtubule-dependent transport of pericentrin. Is required for progress through the spindle assembly checkpoint. The phosphorylated form appears to be involved in the selective removal of MAD1L1 and MAD1L2 but not BUB1B from kinetochores. Forms a functional Rab11/RAB11FIP3/dynein complex onto endosomal membrane that regulates the movement of peripheral sorting endosomes (SE) along microtubule tracks toward the microtubule organizing center/centrosome, generating the endosomal recycling compartment (ERC). The polypeptide is Cytoplasmic dynein 1 light intermediate chain 1 (DYNC1LI1) (Homo sapiens (Human)).